We begin with the raw amino-acid sequence, 350 residues long: Enoyl-[acyl-carrier-protein] reductase, mitochondrial (350 aa).

The transit peptide at 1–14 (MNSTRNIISLVRRY) directs the protein to the mitochondrion. Y69 functions as the Proton donor in the catalytic mechanism. Residues N143, 169 to 172 (NSMV), 192 to 194 (RDG), 261 to 264 (YGGM), 286 to 288 (FWL), and K343 contribute to the NADP(+) site.

It belongs to the zinc-containing alcohol dehydrogenase family. Quinone oxidoreductase subfamily. In terms of assembly, homodimer.

It is found in the mitochondrion. The catalysed reaction is a 2,3-saturated acyl-[ACP] + NADP(+) = a (2E)-enoyl-[ACP] + NADPH + H(+). Catalyzes the NADPH-dependent reduction of trans-2-enoyl thioesters in mitochondrial fatty acid synthesis (fatty acid synthesis type II). Fatty acid chain elongation in mitochondria uses acyl carrier protein (ACP) as an acyl group carrier, but the enzyme accepts both ACP and CoA thioesters as substrates in vitro. This Dictyostelium discoideum (Social amoeba) protein is Enoyl-[acyl-carrier-protein] reductase, mitochondrial (mecr).